A 107-amino-acid chain; its full sequence is 4-carboxymethyl-4-methylbutenolide mutase (107 aa).

The active-site Proton donor/acceptor is the H26. Residues H26 and Y39 each contribute to the 3-methylmuconolactone site. The 4-methylmuconolactone site is built by H26 and Y39.

Belongs to the MmlI family. In terms of assembly, homodimer.

It carries out the reaction 4-methylmuconolactone = 3-methylmuconolactone. With respect to regulation, inhibited by p-chloromercuribenzoate. In terms of biological role, isomerase involved in the degradation of 4-methylsalicylate and 5-methylsalicylate. Catalyzes the isomerization of the dead-end metabolite 4-methylmuconolactone (4-ML) to 3-methylmuconolactone (3-ML), which can then be further degraded through a modified 3-oxoadipate pathway. Can also use 1-methylbislactone but not 3-methyl-cis,cis-muconate. The polypeptide is 4-carboxymethyl-4-methylbutenolide mutase (Pseudomonas reinekei).